The sequence spans 300 residues: Ribosomal protein L11 methyltransferase (300 aa).

S-adenosyl-L-methionine-binding residues include Thr-152, Gly-173, Asp-195, and Asn-234.

This sequence belongs to the methyltransferase superfamily. PrmA family.

The protein resides in the cytoplasm. It carries out the reaction L-lysyl-[protein] + 3 S-adenosyl-L-methionine = N(6),N(6),N(6)-trimethyl-L-lysyl-[protein] + 3 S-adenosyl-L-homocysteine + 3 H(+). Its function is as follows. Methylates ribosomal protein L11. This is Ribosomal protein L11 methyltransferase from Burkholderia ambifaria (strain MC40-6).